A 348-amino-acid polypeptide reads, in one-letter code: Phosphate acyltransferase (348 aa).

It belongs to the PlsX family. In terms of assembly, homodimer. Probably interacts with PlsY.

Its subcellular location is the cytoplasm. The enzyme catalyses a fatty acyl-[ACP] + phosphate = an acyl phosphate + holo-[ACP]. The protein operates within lipid metabolism; phospholipid metabolism. In terms of biological role, catalyzes the reversible formation of acyl-phosphate (acyl-PO(4)) from acyl-[acyl-carrier-protein] (acyl-ACP). This enzyme utilizes acyl-ACP as fatty acyl donor, but not acyl-CoA. This chain is Phosphate acyltransferase, found in Lactiplantibacillus plantarum (strain ATCC BAA-793 / NCIMB 8826 / WCFS1) (Lactobacillus plantarum).